The sequence spans 195 residues: UMP-CMP kinase (195 aa).

G17–T22 is a binding site for ATP. An NMP region spans residues S37–V66. A ribonucleoside 5'-phosphate-binding positions include R43, E64 to V66, and G91 to R94. N98 is a CMP binding site. The interval K131–D141 is LID. R132 is a binding site for ATP. The a ribonucleoside 5'-phosphate site is built by R138 and R149. Position 177 (R177) interacts with ATP.

This sequence belongs to the adenylate kinase family. UMP-CMP kinase subfamily. As to quaternary structure, monomer. Requires Mg(2+) as cofactor.

It localises to the cytoplasm. The protein localises to the nucleus. It catalyses the reaction CMP + ATP = CDP + ADP. It carries out the reaction dCMP + ATP = dCDP + ADP. The catalysed reaction is UMP + ATP = UDP + ADP. In terms of biological role, catalyzes the phosphorylation of pyrimidine nucleoside monophosphates at the expense of ATP. Plays an important role in de novo pyrimidine nucleotide biosynthesis. Has preference for UMP and CMP as phosphate acceptors. The chain is UMP-CMP kinase from Dictyostelium discoideum (Social amoeba).